The primary structure comprises 301 residues: Transcription elongation factor A protein 1 (301 aa).

At methionine 1 the chain carries N-acetylmethionine. One can recognise a TFIIS N-terminal domain in the interval 3–80 (DEVIRIAKKM…KSWKKLLDGP (78 aa)). A Glycyl lysine isopeptide (Lys-Gly) (interchain with G-Cter in ubiquitin) cross-link involves residue lysine 55. Phosphoserine is present on residues serine 57, serine 81, serine 97, and serine 100. A compositionally biased stretch (basic and acidic residues) spans 76–93 (LLDGPSTDKDSEEKKKDT). Residues 76-139 (LLDGPSTDKD…FPRAPSTSDS (64 aa)) are disordered. The TFIIS central domain occupies 140–256 (VRLKCREMLA…EHQMAKTGGT (117 aa)). Residues 259–299 (DLFTCGKCKKKNCTYTQVQTRSADEPMTTFVVCNECGNRWK) form a TFIIS-type zinc finger. Zn(2+) is bound by residues cysteine 263, cysteine 266, cysteine 291, and cysteine 294.

It belongs to the TFS-II family. Interacts with EAF2. Associates with UBR5 and forms a transcription regulatory complex made of CDK9, Pol II, UBR5 and TCEA1/TFIIS. Part of TBP-based Pol II pre-initiation complex (PIC), in which Pol II core assembles with general transcription factors and other specific initiation factors including GTF2E1, GTF2E2, GTF2F1, GTF2F2, TCEA1, ERCC2, ERCC3, GTF2H2, GTF2H3, GTF2H4, GTF2H5, GTF2A1, GTF2A2, GTF2B and TBP; this large multi-subunit PIC complex mediates DNA unwinding and targets Pol II core to the transcription start site where the first phosphodiester bond forms.

The protein resides in the nucleus. Necessary for efficient RNA polymerase II transcription elongation past template-encoded arresting sites. The arresting sites in DNA have the property of trapping a certain fraction of elongating RNA polymerases that pass through, resulting in locked ternary complexes. Cleavage of the nascent transcript by S-II allows the resumption of elongation from the new 3'-terminus. The protein is Transcription elongation factor A protein 1 (TCEA1) of Bos taurus (Bovine).